A 568-amino-acid polypeptide reads, in one-letter code: 2-succinyl-5-enolpyruvyl-6-hydroxy-3-cyclohexene-1-carboxylate synthase (568 aa).

It belongs to the TPP enzyme family. MenD subfamily. As to quaternary structure, homodimer. The cofactor is Mg(2+). It depends on Mn(2+) as a cofactor. Requires thiamine diphosphate as cofactor.

The catalysed reaction is isochorismate + 2-oxoglutarate + H(+) = 5-enolpyruvoyl-6-hydroxy-2-succinyl-cyclohex-3-ene-1-carboxylate + CO2. Its pathway is quinol/quinone metabolism; 1,4-dihydroxy-2-naphthoate biosynthesis; 1,4-dihydroxy-2-naphthoate from chorismate: step 2/7. It functions in the pathway quinol/quinone metabolism; menaquinone biosynthesis. Catalyzes the thiamine diphosphate-dependent decarboxylation of 2-oxoglutarate and the subsequent addition of the resulting succinic semialdehyde-thiamine pyrophosphate anion to isochorismate to yield 2-succinyl-5-enolpyruvyl-6-hydroxy-3-cyclohexene-1-carboxylate (SEPHCHC). The chain is 2-succinyl-5-enolpyruvyl-6-hydroxy-3-cyclohexene-1-carboxylate synthase from Haemophilus influenzae (strain 86-028NP).